The primary structure comprises 340 residues: MSVTGLPFDDFRVLLRDLPGPDSQALVAARDRDRQLTKPPGSLGRLEEIAMWLAAWSGRAPAVNRPLVAIFAGNHGVARHGITPFPSSVTQQMVENFAAGGAAINQICVAHDLGLKIFDLALDYPTGDITVEPALSERDCAATMAFGMEAIAGGTDLLCLGEMGIGNTTIAAAINLALYGGSAEDWVGPGTGSQGEMLERKIAVVKQAVEFHRDHLSDPLEVMRRLGGREIAAMAGAILAARMERIPVLIDGYVATAAAALLKAANPSALDHCLIGHVSAEPGHLKAIDKLGKTPLLALGMRLGEGTGAALAAGIVKAAAASHTGMATFEQAGVTNAGTH.

Glu-305 functions as the Proton acceptor in the catalytic mechanism.

Belongs to the CobT family.

The enzyme catalyses 5,6-dimethylbenzimidazole + nicotinate beta-D-ribonucleotide = alpha-ribazole 5'-phosphate + nicotinate + H(+). It functions in the pathway nucleoside biosynthesis; alpha-ribazole biosynthesis; alpha-ribazole from 5,6-dimethylbenzimidazole: step 1/2. Catalyzes the synthesis of alpha-ribazole-5'-phosphate from nicotinate mononucleotide (NAMN) and 5,6-dimethylbenzimidazole (DMB). This chain is Nicotinate-nucleotide--dimethylbenzimidazole phosphoribosyltransferase, found in Allorhizobium ampelinum (strain ATCC BAA-846 / DSM 112012 / S4) (Agrobacterium vitis (strain S4)).